A 104-amino-acid chain; its full sequence is MAPAATAAAPRLLRAAMLFLLLVAAGRRAAGAPVVNELRCQCLQTLQGIHLKNIQSVKVTTPGPHCDQTEVIASLKTGQEVCLNPTAPMVKKIIDKMLNKASAN.

The first 30 residues, 1–30, serve as a signal peptide directing secretion; that stretch reads MAPAATAAAPRLLRAAMLFLLLVAAGRRAA. Intrachain disulfides connect C40-C66 and C42-C82.

It belongs to the intercrine alpha (chemokine CxC) family.

Its subcellular location is the secreted. The polypeptide is Growth-regulated protein homolog alpha (Bos taurus (Bovine)).